Here is a 319-residue protein sequence, read N- to C-terminus: MKIELSMQPWNPGYSSEGATAQETYTCPKMIEMEQAEAQLAELDLLASMFPGENELIVNDQLAVAELKDCIEKKTMEGRSSKVYFTINMNLDVSDEKMAMFSLACILPFKYPAVLPEITVRSVLLSRSQQTQLNTDLTAFLQKHCHGDVCILNATEWVREHASGYVSRDTSSSPTTGSTVQSVDLIFTRLWIYSHHIYNKCKRKNILEWAKELSLSGFSMPGKPGVVCVEGPQSACEEFWSRLRKLNWKRILIRHREDIPFDGTNDETERQRKFSIFEEKVFSVNGARGNHMDFGQLYQFLNTKGCGDVFQMFFGVEGQ.

The RWD domain maps to 41-165 (AELDLLASMF…EWVREHASGY (125 aa)). The residue at position 275 (Ser-275) is a Phosphoserine.

As to expression, ubiquitous.

In Homo sapiens (Human), this protein is RWD domain-containing protein 2B (RWDD2B).